Reading from the N-terminus, the 303-residue chain is ATP synthase gamma chain (303 aa).

It belongs to the ATPase gamma chain family. As to quaternary structure, F-type ATPases have 2 components, CF(1) - the catalytic core - and CF(0) - the membrane proton channel. CF(1) has five subunits: alpha(3), beta(3), gamma(1), delta(1), epsilon(1). CF(0) has three main subunits: a, b and c.

Its subcellular location is the cell membrane. Its function is as follows. Produces ATP from ADP in the presence of a proton gradient across the membrane. The gamma chain is believed to be important in regulating ATPase activity and the flow of protons through the CF(0) complex. The sequence is that of ATP synthase gamma chain from Oenococcus oeni (strain ATCC BAA-331 / PSU-1).